The primary structure comprises 212 residues: Thymidylate kinase (212 aa).

Residue 11-18 (GPEGAGKT) coordinates ATP.

It belongs to the thymidylate kinase family.

It carries out the reaction dTMP + ATP = dTDP + ADP. In terms of biological role, phosphorylation of dTMP to form dTDP in both de novo and salvage pathways of dTTP synthesis. This is Thymidylate kinase from Streptococcus pneumoniae (strain CGSP14).